Reading from the N-terminus, the 160-residue chain is Large ribosomal subunit protein uL18 (160 aa).

Belongs to the universal ribosomal protein uL18 family. Part of the 50S ribosomal subunit. Contacts the 5S and 23S rRNAs.

Functionally, this is one of the proteins that bind and probably mediate the attachment of the 5S RNA into the large ribosomal subunit, where it forms part of the central protuberance. This is Large ribosomal subunit protein uL18 from Thermoplasma volcanium (strain ATCC 51530 / DSM 4299 / JCM 9571 / NBRC 15438 / GSS1).